The following is a 515-amino-acid chain: 2-isopropylmalate synthase (515 aa).

Positions 5 to 267 (VIIFDTTLRD…HTSLKNDEIH (263 aa)) constitute a Pyruvate carboxyltransferase domain. Residues aspartate 14, histidine 202, histidine 204, and asparagine 238 each coordinate Mn(2+). The regulatory domain stretch occupies residues 392–515 (KLNYLSVQSG…EIKQNKITTV (124 aa)).

It belongs to the alpha-IPM synthase/homocitrate synthase family. LeuA type 1 subfamily. In terms of assembly, homodimer. Mn(2+) is required as a cofactor.

The protein localises to the cytoplasm. The catalysed reaction is 3-methyl-2-oxobutanoate + acetyl-CoA + H2O = (2S)-2-isopropylmalate + CoA + H(+). Its pathway is amino-acid biosynthesis; L-leucine biosynthesis; L-leucine from 3-methyl-2-oxobutanoate: step 1/4. Functionally, catalyzes the condensation of the acetyl group of acetyl-CoA with 3-methyl-2-oxobutanoate (2-ketoisovalerate) to form 3-carboxy-3-hydroxy-4-methylpentanoate (2-isopropylmalate). The protein is 2-isopropylmalate synthase of Aliivibrio salmonicida (strain LFI1238) (Vibrio salmonicida (strain LFI1238)).